The following is a 112-amino-acid chain: uncharacterized protein (112 aa).

The interval 90–112 (KNFNNSKNDQIKKKKIDNNQVNL) is disordered.

This is an uncharacterized protein from Buchnera aphidicola subsp. Acyrthosiphon pisum (strain APS) (Acyrthosiphon pisum symbiotic bacterium).